A 168-amino-acid polypeptide reads, in one-letter code: Alpha-amylase/trypsin inhibitor CM3 (168 aa).

Positions 1–25 are cleaved as a signal peptide; that stretch reads MACKSSCSLLLLAAVLLSVLAAASA.

The protein belongs to the protease inhibitor I6 (cereal trypsin/alpha-amylase inhibitor) family. As to quaternary structure, subunit of the tetrameric inhibitor. Five disulfide bonds, which are essential for the inhibitor activity, are probably present. Developing endosperm.

It is found in the secreted. Alpha-amylase/trypsin inhibitor. It could be involved in insect defense mechanisms. The polypeptide is Alpha-amylase/trypsin inhibitor CM3 (Triticum aestivum (Wheat)).